The chain runs to 158 residues: Crossover junction endodeoxyribonuclease RuvC (158 aa).

Residues Asp-7, Glu-67, and Asp-140 contribute to the active site. Mg(2+) contacts are provided by Asp-7, Glu-67, and Asp-140.

It belongs to the RuvC family. Homodimer which binds Holliday junction (HJ) DNA. The HJ becomes 2-fold symmetrical on binding to RuvC with unstacked arms; it has a different conformation from HJ DNA in complex with RuvA. In the full resolvosome a probable DNA-RuvA(4)-RuvB(12)-RuvC(2) complex forms which resolves the HJ. Mg(2+) serves as cofactor.

The protein resides in the cytoplasm. The catalysed reaction is Endonucleolytic cleavage at a junction such as a reciprocal single-stranded crossover between two homologous DNA duplexes (Holliday junction).. Functionally, the RuvA-RuvB-RuvC complex processes Holliday junction (HJ) DNA during genetic recombination and DNA repair. Endonuclease that resolves HJ intermediates. Cleaves cruciform DNA by making single-stranded nicks across the HJ at symmetrical positions within the homologous arms, yielding a 5'-phosphate and a 3'-hydroxyl group; requires a central core of homology in the junction. The consensus cleavage sequence is 5'-(A/T)TT(C/G)-3'. Cleavage occurs on the 3'-side of the TT dinucleotide at the point of strand exchange. HJ branch migration catalyzed by RuvA-RuvB allows RuvC to scan DNA until it finds its consensus sequence, where it cleaves and resolves the cruciform DNA. In Dictyoglomus thermophilum (strain ATCC 35947 / DSM 3960 / H-6-12), this protein is Crossover junction endodeoxyribonuclease RuvC.